The sequence spans 382 residues: Cysteine desulfurase IscS 1 (382 aa).

Asn149 is a binding site for pyridoxal 5'-phosphate. The active-site Cysteine persulfide intermediate is Cys321. Position 321 (Cys321) interacts with [2Fe-2S] cluster.

This sequence belongs to the class-V pyridoxal-phosphate-dependent aminotransferase family. NifS/IscS subfamily. In terms of assembly, homodimer. Forms a heterotetramer with IscU, interacts with other sulfur acceptors. The cofactor is pyridoxal 5'-phosphate.

The protein resides in the cytoplasm. The enzyme catalyses (sulfur carrier)-H + L-cysteine = (sulfur carrier)-SH + L-alanine. The protein operates within cofactor biosynthesis; iron-sulfur cluster biosynthesis. In terms of biological role, master enzyme that delivers sulfur to a number of partners involved in Fe-S cluster assembly, tRNA modification or cofactor biosynthesis. Catalyzes the removal of elemental sulfur atoms from cysteine to produce alanine. Functions as a sulfur delivery protein for Fe-S cluster synthesis onto IscU, an Fe-S scaffold assembly protein, as well as other S acceptor proteins. This chain is Cysteine desulfurase IscS 1, found in Archaeoglobus fulgidus (strain ATCC 49558 / DSM 4304 / JCM 9628 / NBRC 100126 / VC-16).